A 494-amino-acid chain; its full sequence is Serine/threonine-protein kinase PBL13 (494 aa).

C4 carries S-palmitoyl cysteine lipidation. Phosphothreonine is present on T65. Residues F76 to I356 enclose the Protein kinase domain. Residues L82 to V90 and K111 each bind ATP. Y156 carries the phosphotyrosine modification. D206 acts as the Proton acceptor in catalysis. S210 carries the post-translational modification Phosphoserine. Phosphoserine; by autocatalysis is present on S240. T241 and T246 each carry phosphothreonine. At Y254 the chain carries Phosphotyrosine. S321 is modified (phosphoserine; by autocatalysis). Phosphothreonine; by autocatalysis occurs at positions 323 and 383. S384 is modified (phosphoserine; by autocatalysis). Phosphothreonine; by autocatalysis is present on residues T395, T398, T406, T413, T421, and T428. Residue S429 is modified to Phosphoserine; by autocatalysis. Residues D434 to R471 are disordered. T443 bears the Phosphothreonine; by autocatalysis mark. A compositionally biased stretch (polar residues) spans T443–D458. 2 positions are modified to phosphoserine; by autocatalysis: S444 and S455. Phosphothreonine; by autocatalysis is present on T456. The segment covering K462–R471 has biased composition (basic residues). Y481 carries the phosphotyrosine; by autocatalysis modification.

Belongs to the protein kinase superfamily. Ser/Thr protein kinase family. In terms of assembly, interacts with RBHOD. Interaction is disrupted by flagellin-induced immune signaling.

It localises to the cell membrane. The enzyme catalyses L-seryl-[protein] + ATP = O-phospho-L-seryl-[protein] + ADP + H(+). The catalysed reaction is L-threonyl-[protein] + ATP = O-phospho-L-threonyl-[protein] + ADP + H(+). Functionally, involved in defense responses. Acts as a negative regulator of plant immune responses. In Arabidopsis thaliana (Mouse-ear cress), this protein is Serine/threonine-protein kinase PBL13.